Consider the following 387-residue polypeptide: Acyl-[acyl-carrier-protein] 6-desaturase (387 aa).

Residues 1–29 (MALVFKSIGAHKTPPCTLNLASPALYHTR) constitute a chloroplast transit peptide. Fe cation-binding residues include Glu131, Glu169, His172, Glu222, Glu255, and His258.

This sequence belongs to the fatty acid desaturase type 2 family. Fe(2+) serves as cofactor.

The protein resides in the plastid. Its subcellular location is the chloroplast. The catalysed reaction is hexadecanoyl-[ACP] + 2 reduced [2Fe-2S]-[ferredoxin] + O2 + 2 H(+) = (6Z)-hexadecenoyl-[ACP] + 2 oxidized [2Fe-2S]-[ferredoxin] + 2 H2O. Its pathway is lipid metabolism; fatty acid metabolism. Its activity is regulated as follows. Inhibited by KCN or H(2)O(2). Delta(6) fatty acid desaturase introducing a cis double bond at carbon 6 of palmitoyl-[acyl-carrier protein](16:0-ACP), producing 16:1(6Z)-ACP. No activity with the coenzyme A ester of the fatty acid. The position of the double bond is determined by its distance from the carboxyl end of the fatty acid. Low activity with several saturated acyl-[acyl-carrier protein]s, including 14:0-ACP and 18:0-ACP. Requires reduced ferredoxin for detectable in vitro activity. In Thunbergia alata (Black-eyed Susan vine), this protein is Acyl-[acyl-carrier-protein] 6-desaturase.